Consider the following 1015-residue polypeptide: PHD finger protein 20-like protein 1 (1015 aa).

A Tudor 1 domain is found at 11–71 (ITFEIGARLE…SNRLRPLERP (61 aa)). Residues lysine 75 and lysine 79 each participate in a glycyl lysine isopeptide (Lys-Gly) (interchain with G-Cter in SUMO2) cross-link. The region spanning 85-141 (FDFKAGEEVLARWTDCRYYPAKIEAINKEGTFTVQFYDGVIRCLKRMHIKAMPEDAK) is the Tudor 2 domain. 2 disordered regions span residues 183–206 (AKNK…RDGG) and 309–367 (EQAI…KAPK). Composition is skewed to polar residues over residues 186–197 (KTGSKPRTSANS) and 315–346 (KPQS…SSGK). Residue serine 368 is modified to Phosphoserine. Disordered regions lie at residues 389–455 (VINK…SSVP) and 478–513 (CGSE…NPTS). Residues 404–415 (PCKHSERRRRSQ) show a composition bias toward basic residues. Position 432 is a phosphoserine (serine 432). 2 stretches are compositionally biased toward polar residues: residues 443–453 (SISSQNQQESS) and 480–489 (SEVTGSQAPD). A Glycyl lysine isopeptide (Lys-Gly) (interchain with G-Cter in SUMO2) cross-link involves residue lysine 530. Positions 539–565 (EKTSTAFGKRKEKDKERKEKRDKDHYK) are enriched in basic and acidic residues. The interval 539–585 (EKTSTAFGKRKEKDKERKEKRDKDHYKPKQKKKKKKKKKSKQHDYSD) is disordered. Residues 566–579 (PKQKKKKKKKKKSK) show a composition bias toward basic residues. The PHD-type zinc-finger motif lies at 681-729 (IVRCICELDEENGFMIQCEECLCWQHSVCMGLLEDSIPEQYICYICRDP). A Glycyl lysine isopeptide (Lys-Gly) (interchain with G-Cter in SUMO2) cross-link involves residue lysine 849. Over residues 859-878 (HSYQKPQSFSQDCHSLTDPG) the composition is skewed to polar residues. The tract at residues 859-889 (HSYQKPQSFSQDCHSLTDPGSSDDDDVSSFE) is disordered. Acidic residues predominate over residues 879–889 (SSDDDDVSSFE). Lysine 907 carries the post-translational modification N6-acetyllysine.

Interacts with methylated DNMT1 (DNMT1K142me1). Interacts with SOX2.

The protein localises to the nucleus. Its function is as follows. Is a negative regulator of proteasomal degradation of a set of methylated proteins, including DNMT1 and SOX2. Involved in the maintainance of embryonic stem cells pluripotency, through the regulation of SOX2 levels. This Rattus norvegicus (Rat) protein is PHD finger protein 20-like protein 1 (Phf20l1).